A 37-amino-acid polypeptide reads, in one-letter code: Cytochrome b6-f complex subunit 5 (37 aa).

The helical transmembrane segment at Leu5–Ala25 threads the bilayer.

It belongs to the PetG family. In terms of assembly, the 4 large subunits of the cytochrome b6-f complex are cytochrome b6, subunit IV (17 kDa polypeptide, PetD), cytochrome f and the Rieske protein, while the 4 small subunits are PetG, PetL, PetM and PetN. The complex functions as a dimer.

It is found in the plastid. The protein resides in the chloroplast thylakoid membrane. Functionally, component of the cytochrome b6-f complex, which mediates electron transfer between photosystem II (PSII) and photosystem I (PSI), cyclic electron flow around PSI, and state transitions. PetG is required for either the stability or assembly of the cytochrome b6-f complex. The protein is Cytochrome b6-f complex subunit 5 of Lemna minor (Common duckweed).